Consider the following 149-residue polypeptide: D-aminoacyl-tRNA deacylase (149 aa).

A Gly-cisPro motif, important for rejection of L-amino acids motif is present at residues Gly137 to Pro138.

It belongs to the DTD family. As to quaternary structure, homodimer.

The protein resides in the cytoplasm. The enzyme catalyses glycyl-tRNA(Ala) + H2O = tRNA(Ala) + glycine + H(+). It carries out the reaction a D-aminoacyl-tRNA + H2O = a tRNA + a D-alpha-amino acid + H(+). Its function is as follows. An aminoacyl-tRNA editing enzyme that deacylates mischarged D-aminoacyl-tRNAs. Also deacylates mischarged glycyl-tRNA(Ala), protecting cells against glycine mischarging by AlaRS. Acts via tRNA-based rather than protein-based catalysis; rejects L-amino acids rather than detecting D-amino acids in the active site. By recycling D-aminoacyl-tRNA to D-amino acids and free tRNA molecules, this enzyme counteracts the toxicity associated with the formation of D-aminoacyl-tRNA entities in vivo and helps enforce protein L-homochirality. This Fervidobacterium nodosum (strain ATCC 35602 / DSM 5306 / Rt17-B1) protein is D-aminoacyl-tRNA deacylase.